Reading from the N-terminus, the 176-residue chain is Large ribosomal subunit protein uL6 (176 aa).

Basic and acidic residues predominate over residues 151 to 170; sequence RPPEPYKGKGVRYADEQVRR. The interval 151 to 176 is disordered; it reads RPPEPYKGKGVRYADEQVRRKEAKKK.

The protein belongs to the universal ribosomal protein uL6 family. Part of the 50S ribosomal subunit.

This protein binds to the 23S rRNA, and is important in its secondary structure. It is located near the subunit interface in the base of the L7/L12 stalk, and near the tRNA binding site of the peptidyltransferase center. The sequence is that of Large ribosomal subunit protein uL6 from Shewanella piezotolerans (strain WP3 / JCM 13877).